The following is a 326-amino-acid chain: Lipoyl synthase (326 aa).

[4Fe-4S] cluster is bound by residues Cys-56, Cys-61, Cys-67, Cys-82, Cys-86, Cys-89, and Ser-298. Residues 68 to 287 (WEDREATFLI…KDEADAIGYS (220 aa)) enclose the Radical SAM core domain.

The protein belongs to the radical SAM superfamily. Lipoyl synthase family. [4Fe-4S] cluster serves as cofactor.

Its subcellular location is the cytoplasm. The catalysed reaction is [[Fe-S] cluster scaffold protein carrying a second [4Fe-4S](2+) cluster] + N(6)-octanoyl-L-lysyl-[protein] + 2 oxidized [2Fe-2S]-[ferredoxin] + 2 S-adenosyl-L-methionine + 4 H(+) = [[Fe-S] cluster scaffold protein] + N(6)-[(R)-dihydrolipoyl]-L-lysyl-[protein] + 4 Fe(3+) + 2 hydrogen sulfide + 2 5'-deoxyadenosine + 2 L-methionine + 2 reduced [2Fe-2S]-[ferredoxin]. It participates in protein modification; protein lipoylation via endogenous pathway; protein N(6)-(lipoyl)lysine from octanoyl-[acyl-carrier-protein]: step 2/2. Its function is as follows. Catalyzes the radical-mediated insertion of two sulfur atoms into the C-6 and C-8 positions of the octanoyl moiety bound to the lipoyl domains of lipoate-dependent enzymes, thereby converting the octanoylated domains into lipoylated derivatives. The sequence is that of Lipoyl synthase from Streptomyces griseus subsp. griseus (strain JCM 4626 / CBS 651.72 / NBRC 13350 / KCC S-0626 / ISP 5235).